The primary structure comprises 337 residues: Undecaprenyl-phosphate 4-deoxy-4-formamido-L-arabinose transferase (337 aa).

The next 2 helical transmembrane spans lie at L235–I255 and F270–L290.

It belongs to the glycosyltransferase 2 family.

Its subcellular location is the cell inner membrane. It carries out the reaction UDP-4-deoxy-4-formamido-beta-L-arabinose + di-trans,octa-cis-undecaprenyl phosphate = 4-deoxy-4-formamido-alpha-L-arabinopyranosyl di-trans,octa-cis-undecaprenyl phosphate + UDP. It participates in glycolipid biosynthesis; 4-amino-4-deoxy-alpha-L-arabinose undecaprenyl phosphate biosynthesis; 4-amino-4-deoxy-alpha-L-arabinose undecaprenyl phosphate from UDP-4-deoxy-4-formamido-beta-L-arabinose and undecaprenyl phosphate: step 1/2. It functions in the pathway bacterial outer membrane biogenesis; lipopolysaccharide biosynthesis. Catalyzes the transfer of 4-deoxy-4-formamido-L-arabinose from UDP to undecaprenyl phosphate. The modified arabinose is attached to lipid A and is required for resistance to polymyxin and cationic antimicrobial peptides. The polypeptide is Undecaprenyl-phosphate 4-deoxy-4-formamido-L-arabinose transferase (Pseudomonas savastanoi pv. phaseolicola (strain 1448A / Race 6) (Pseudomonas syringae pv. phaseolicola (strain 1448A / Race 6))).